A 148-amino-acid polypeptide reads, in one-letter code: SsrA-binding protein (148 aa).

A disordered region spans residues 119–148 (AKGKKQHDKRQSMKEADWKREKQRLIKHTR). The segment covering 127-142 (KRQSMKEADWKREKQR) has biased composition (basic and acidic residues).

This sequence belongs to the SmpB family.

The protein localises to the cytoplasm. Its function is as follows. Required for rescue of stalled ribosomes mediated by trans-translation. Binds to transfer-messenger RNA (tmRNA), required for stable association of tmRNA with ribosomes. tmRNA and SmpB together mimic tRNA shape, replacing the anticodon stem-loop with SmpB. tmRNA is encoded by the ssrA gene; the 2 termini fold to resemble tRNA(Ala) and it encodes a 'tag peptide', a short internal open reading frame. During trans-translation Ala-aminoacylated tmRNA acts like a tRNA, entering the A-site of stalled ribosomes, displacing the stalled mRNA. The ribosome then switches to translate the ORF on the tmRNA; the nascent peptide is terminated with the 'tag peptide' encoded by the tmRNA and targeted for degradation. The ribosome is freed to recommence translation, which seems to be the essential function of trans-translation. The polypeptide is SsrA-binding protein (Neisseria meningitidis serogroup C (strain 053442)).